The following is a 396-amino-acid chain: MKIAYFDCFSGISGDMCLGALIACGLSQDELTSGLKGLGLEGWELRVREVKQHSIAATDVAVQVTGSQPHRHLADILGLINNSSLPAPVKEKSAAVFKNLARAEGQVHGIDASQVHFHEVGAVDAIIDIVGSILGLHLLGIEKVISSPLPAGSGWVDCRHGKLPVPAPATLYLLQGYPVYGTEDKAELVTPTGAALITTLADSFGPFPAMNLTRVGFGAGKTELPHPNLLRLALGEINSGQLEGEESSLVIETTIDDMNPEFFPALLEETMAAGAVDAFFTPVQMKKGRPGILFTALCPENKLAAVAAAIFTHSSTLGLRFRRDQRLVCQRRMAEVVTPYGTVPVKLGLYRDPTGQVITNIAPEYESCRQIAKSAGAPLKEVYAAALAAARALKAF.

This sequence belongs to the LarC family.

It carries out the reaction Ni(II)-pyridinium-3,5-bisthiocarboxylate mononucleotide = pyridinium-3,5-bisthiocarboxylate mononucleotide + Ni(2+). Functionally, involved in the biosynthesis of a nickel-pincer cofactor ((SCS)Ni(II) pincer complex). Binds Ni(2+), and functions in nickel delivery to pyridinium-3,5-bisthiocarboxylic acid mononucleotide (P2TMN), to form the mature cofactor. Is thus probably required for the activation of nickel-pincer cofactor-dependent enzymes. In Moorella thermoacetica (strain ATCC 39073 / JCM 9320), this protein is Pyridinium-3,5-bisthiocarboxylic acid mononucleotide nickel insertion protein.